Consider the following 943-residue polypeptide: Isoleucine--tRNA ligase (943 aa).

The short motif at 58–68 is the 'HIGH' region element; that stretch reads PYANGKIHIGH. Glutamate 567 is an L-isoleucyl-5'-AMP binding site. A 'KMSKS' region motif is present at residues 608-612; sequence KMSKS. Residue lysine 611 participates in ATP binding. Residues cysteine 906, cysteine 909, cysteine 926, and cysteine 929 each contribute to the Zn(2+) site.

The protein belongs to the class-I aminoacyl-tRNA synthetase family. IleS type 1 subfamily. As to quaternary structure, monomer. Zn(2+) serves as cofactor.

The protein resides in the cytoplasm. The enzyme catalyses tRNA(Ile) + L-isoleucine + ATP = L-isoleucyl-tRNA(Ile) + AMP + diphosphate. Catalyzes the attachment of isoleucine to tRNA(Ile). As IleRS can inadvertently accommodate and process structurally similar amino acids such as valine, to avoid such errors it has two additional distinct tRNA(Ile)-dependent editing activities. One activity is designated as 'pretransfer' editing and involves the hydrolysis of activated Val-AMP. The other activity is designated 'posttransfer' editing and involves deacylation of mischarged Val-tRNA(Ile). This chain is Isoleucine--tRNA ligase, found in Pseudomonas putida (strain GB-1).